A 354-amino-acid polypeptide reads, in one-letter code: Hyaluronan and proteoglycan link protein 1 (354 aa).

Residues 1-15 (MKSLLLLVLISICGA) constitute a propeptide that is removed on maturation. Asparagine 21 and asparagine 56 each carry an N-linked (GlcNAc...) asparagine glycan. Residues 38–152 (PRLLVEAEQA…EGLEDDTAVV (115 aa)) enclose the Ig-like V-type domain. Intrachain disulfides connect cysteine 61/cysteine 139, cysteine 181/cysteine 252, cysteine 205/cysteine 226, cysteine 279/cysteine 349, and cysteine 304/cysteine 325. 2 Link domains span residues 159-254 (VVFP…FCFT) and 259-351 (GRFY…YCFR).

The protein belongs to the HAPLN family.

It is found in the secreted. The protein localises to the extracellular space. The protein resides in the extracellular matrix. Stabilizes the aggregates of proteoglycan monomers with hyaluronic acid in the extracellular cartilage matrix. The protein is Hyaluronan and proteoglycan link protein 1 (HAPLN1) of Equus caballus (Horse).